The following is a 348-amino-acid chain: EGF-like domain-containing protein 1 (348 aa).

The first 19 residues, 1 to 19 (MFYLSTFMTIVISLSLVSC), serve as a signal peptide directing secretion. Residues 60–92 (TGSNCTVTCQNNGKCYDGSKCLCSSDYTGDLCE) form the EGF-like domain. Intrachain disulfides connect Cys-64/Cys-74, Cys-68/Cys-80, and Cys-82/Cys-91. Positions 99-342 (RCTLDAVVFE…PTCAAPXVGQ (244 aa)) constitute a ZP domain.

In terms of tissue distribution, prismatic layer of shell (at protein level). Expressed primarily in the mantle with highest level in the mantle edge and lower level in the mantle pallium.

It is found in the secreted. The chain is EGF-like domain-containing protein 1 from Pinctada maxima (Silver-lipped pearl oyster).